A 248-amino-acid polypeptide reads, in one-letter code: ATP synthase subunit a, chloroplastic (248 aa).

The next 5 helical transmembrane spans lie at 38-58 (QVLI…TIVV), 96-116 (VPFI…GALL), 135-155 (INTT…AGIS), 200-220 (LVVV…VMFL), and 221-241 (GLFT…AYIG).

Belongs to the ATPase A chain family. F-type ATPases have 2 components, CF(1) - the catalytic core - and CF(0) - the membrane proton channel. CF(1) has five subunits: alpha(3), beta(3), gamma(1), delta(1), epsilon(1). CF(0) has four main subunits: a, b, b' and c.

Its subcellular location is the plastid. The protein localises to the chloroplast thylakoid membrane. Its function is as follows. Key component of the proton channel; it plays a direct role in the translocation of protons across the membrane. This is ATP synthase subunit a, chloroplastic from Amborella trichopoda.